Reading from the N-terminus, the 152-residue chain is Small ribosomal subunit protein bS6 (152 aa).

A disordered region spans residues 96–152 (HEEGPSAMLQKRDRDDRGPREGGDRGPRREFGDRPPRRDGDFQRGPRPDRAPREDRA).

It belongs to the bacterial ribosomal protein bS6 family.

In terms of biological role, binds together with bS18 to 16S ribosomal RNA. The protein is Small ribosomal subunit protein bS6 of Rhizobium etli (strain ATCC 51251 / DSM 11541 / JCM 21823 / NBRC 15573 / CFN 42).